Reading from the N-terminus, the 599-residue chain is Dehydrogenase eriK (599 aa).

The N-terminal stretch at Met1–Ala20 is a signal peptide. Residues Thr43 to Ala44 and Glu64 to Gly65 each bind FAD. An N-linked (GlcNAc...) asparagine glycan is attached at Asn93. Asn122–Tyr125 is a binding site for FAD. N-linked (GlcNAc...) asparagine glycans are attached at residues Asn169, Asn191, Asn234, Asn260, Asn284, Asn319, Asn339, Asn353, Asn365, Asn370, Asn398, Asn456, and Asn518. FAD contacts are provided by residues Ala569 and Thr580–Gln581.

The protein belongs to the GMC oxidoreductase family. As to quaternary structure, homodimer. Requires FAD as cofactor.

In terms of biological role, dehydrogenase; part of the gene cluster that mediates the biosynthesis of erinacines, cyathane-xylosides that show unique biological activities, including leishmanicidal activity, stimulating activity for nerve growth-factor synthesis, and agonistic activity toward the kappa opioid receptor. The role of the dehydrogenase eriK within the pathway has still to be determined. The first step of the erinacines biosynthesis pathway is catalyzed by the geranylgeranyl diphosphate (GGPP) synthase eriE via conversion of farnesyl pyrophosphate and isopentyl pyrophosphate into geranylgeranyl pyrophosphate (GGPP). GGPP is then substrate of the diterpene cyclase eriG for the production of cyatha-3,12-diene. The cytochrome P450 monooxygenase eriI then hydroxylates cyatha-3,12-diene at C-14 of the seven-membered ring to produce erinacol, which is further hydroxylated at C-15 by the cytochrome P450 monooxygenase eriC to yield cyathadiol. The cytochrome P450 monooxygenase eriA then catalyzes C-11 hydroxylation in the presence of the short chain dehydrogenase/reductase (SDR) eriH, which leads to the production of cyathatriol. The acetyltransferase eriL converts cyathatriol into 11-O-acetyl-cyathatriol. The SDR eriH catalyzes further oxidation of 11-O-acetyl-cyathatriol into 1-O-acetylcyathin A3. Finally, the glycosyl transferase eriJ tranfers xylose from UDP-xylose onto C-14 of 11-O-acetyl-cyathatriol to form eracine Q. EriJ is also able to convert 11-O-acetyl-cyathatriol to eracine Q2 by using UDP-D-glucose as cosubstrate, but at a lower rate. This Hericium erinaceus (Lion's mane mushroom) protein is Dehydrogenase eriK.